A 91-amino-acid chain; its full sequence is UPF0223 protein SAR1071 (91 aa).

The protein belongs to the UPF0223 family.

In Staphylococcus aureus (strain MRSA252), this protein is UPF0223 protein SAR1071.